A 169-amino-acid chain; its full sequence is Ubiquitin-fold modifier-conjugating enzyme 1 (169 aa).

Cys-116 acts as the Glycyl thioester intermediate in catalysis.

This sequence belongs to the ubiquitin-conjugating enzyme family. UFC1 subfamily.

Its function is as follows. E2-like enzyme which forms an intermediate with UFM1 via a thioester linkage. This chain is Ubiquitin-fold modifier-conjugating enzyme 1, found in Branchiostoma floridae (Florida lancelet).